Reading from the N-terminus, the 189-residue chain is Ribosome-recycling factor (189 aa).

It belongs to the RRF family.

It is found in the cytoplasm. In terms of biological role, responsible for the release of ribosomes from messenger RNA at the termination of protein biosynthesis. May increase the efficiency of translation by recycling ribosomes from one round of translation to another. The polypeptide is Ribosome-recycling factor (Salinibacter ruber (strain DSM 13855 / M31)).